The primary structure comprises 341 residues: HTH-type transcriptional repressor PurR (341 aa).

One can recognise an HTH lacI-type domain in the interval A2–V56. Positions I4–N23 form a DNA-binding region, H-T-H motif. The DNA-binding element occupies S48–V56. Positions 73, 190, 192, 221, and 275 each coordinate hypoxanthine.

As to quaternary structure, homodimer.

Its pathway is purine metabolism; purine nucleotide biosynthesis [regulation]. Is the main repressor of the genes involved in the de novo synthesis of purine nucleotides, regulating purB, purC, purEK, purF, purHD, purL, purMN and guaBA expression. PurR is allosterically activated to bind its cognate DNA by binding the purine corepressors, hypoxanthine or guanine, thereby effecting transcription repression. This chain is HTH-type transcriptional repressor PurR, found in Pectobacterium atrosepticum (strain SCRI 1043 / ATCC BAA-672) (Erwinia carotovora subsp. atroseptica).